A 168-amino-acid chain; its full sequence is Lipoprotein signal peptidase (168 aa).

The next 4 helical transmembrane spans lie at 5 to 25, 37 to 57, 59 to 79, and 85 to 105; these read SPYA…KHLV, LVPF…SMFS, FGDT…LYLA, and GHVI…GNLI. Active-site residues include Asp115 and Asp133. Residues 125–145 form a helical membrane-spanning segment; the sequence is SFAIFNLADAFISVGAALVVF.

This sequence belongs to the peptidase A8 family.

Its subcellular location is the cell inner membrane. The enzyme catalyses Release of signal peptides from bacterial membrane prolipoproteins. Hydrolyzes -Xaa-Yaa-Zaa-|-(S,diacylglyceryl)Cys-, in which Xaa is hydrophobic (preferably Leu), and Yaa (Ala or Ser) and Zaa (Gly or Ala) have small, neutral side chains.. It functions in the pathway protein modification; lipoprotein biosynthesis (signal peptide cleavage). This protein specifically catalyzes the removal of signal peptides from prolipoproteins. The polypeptide is Lipoprotein signal peptidase (Mesorhizobium japonicum (strain LMG 29417 / CECT 9101 / MAFF 303099) (Mesorhizobium loti (strain MAFF 303099))).